The sequence spans 528 residues: Chromosomal replication initiator protein DnaA (528 aa).

Residues M1–P104 form a domain I, interacts with DnaA modulators region. The segment at P95 to R158 is disordered. Over residues P104–E123 the composition is skewed to basic and acidic residues. The domain II stretch occupies residues P105–N187. A compositionally biased stretch (acidic residues) spans T149 to R158. A domain III, AAA+ region region spans residues S188–A404. Positions 232, 234, 235, and 236 each coordinate ATP. The interval S405–R528 is domain IV, binds dsDNA.

Belongs to the DnaA family. In terms of assembly, oligomerizes as a right-handed, spiral filament on DNA at oriC.

It localises to the cytoplasm. Functionally, plays an essential role in the initiation and regulation of chromosomal replication. ATP-DnaA binds to the origin of replication (oriC) to initiate formation of the DNA replication initiation complex once per cell cycle. Binds the DnaA box (a 9 base pair repeat at the origin) and separates the double-stranded (ds)DNA. Forms a right-handed helical filament on oriC DNA; dsDNA binds to the exterior of the filament while single-stranded (ss)DNA is stabiized in the filament's interior. The ATP-DnaA-oriC complex binds and stabilizes one strand of the AT-rich DNA unwinding element (DUE), permitting loading of DNA polymerase. After initiation quickly degrades to an ADP-DnaA complex that is not apt for DNA replication. Binds acidic phospholipids. This chain is Chromosomal replication initiator protein DnaA, found in Rhodococcus jostii (strain RHA1).